The following is a 102-amino-acid chain: Aspartyl/glutamyl-tRNA(Asn/Gln) amidotransferase subunit C (102 aa).

The protein belongs to the GatC family. As to quaternary structure, heterotrimer of A, B and C subunits.

The catalysed reaction is L-glutamyl-tRNA(Gln) + L-glutamine + ATP + H2O = L-glutaminyl-tRNA(Gln) + L-glutamate + ADP + phosphate + H(+). It catalyses the reaction L-aspartyl-tRNA(Asn) + L-glutamine + ATP + H2O = L-asparaginyl-tRNA(Asn) + L-glutamate + ADP + phosphate + 2 H(+). Functionally, allows the formation of correctly charged Asn-tRNA(Asn) or Gln-tRNA(Gln) through the transamidation of misacylated Asp-tRNA(Asn) or Glu-tRNA(Gln) in organisms which lack either or both of asparaginyl-tRNA or glutaminyl-tRNA synthetases. The reaction takes place in the presence of glutamine and ATP through an activated phospho-Asp-tRNA(Asn) or phospho-Glu-tRNA(Gln). The chain is Aspartyl/glutamyl-tRNA(Asn/Gln) amidotransferase subunit C from Lactobacillus acidophilus (strain ATCC 700396 / NCK56 / N2 / NCFM).